We begin with the raw amino-acid sequence, 869 residues long: Sodium-dependent phosphate transporter (869 aa).

At 1-18 (MEAVAELSAPSLAGAPGE) the chain is on the extracellular side. A helical transmembrane segment spans residues 19-39 (YTWIVAVAGVTCFLTAFAIGA). Over 40–54 (NDVANTFSSSVGSRA) the chain is Cytoplasmic. The chain crosses the membrane as a helical span at residues 55-75 (IPLWAAIGMSAVLETVGATLL). Residues 76 to 97 (GGAVTDSIRSKIIDFEVFRETP) lie on the Extracellular side of the membrane. Residues 98–118 (SILMTGMLCALVGAGLWLFLA) traverse the membrane as a helical segment. Residues 119-120 (NH) are Cytoplasmic-facing. Residues 121-141 (LGLPVSTTHSIIGALLGFGLA) form a helical membrane-spanning segment. The Extracellular portion of the chain corresponds to 142-154 (SGNVRAVKWTQVA). A helical membrane pass occupies residues 155–175 (FIVGSWVAAPLAASAAGATIF). At 176–196 (VCMRRLILRSRQPLRRAKRFL) the chain is on the cytoplasmic side. Residues 197–217 (WIFIYLITLTFSVFLVFKNFF) form a helical membrane-spanning segment. Residues 218–250 (ELNVSCDQMVAGGRVEHFEPCRISRWADAHSGT) lie on the Extracellular side of the membrane. Residues 251 to 271 (ALGIAVALSVALTFVISCLVY) form a helical membrane-spanning segment. Residues 272–720 (RFAFYRVESY…SGSADSEIGS (449 aa)) are Cytoplasmic-facing. 3 disordered regions span residues 286-312 (KRSS…GGLL), 374-401 (AAAA…GSSV), and 453-571 (SAFL…KRER). Positions 457-481 (SSPSSSVPPSSPSPSSTPSSPSASP) are enriched in low complexity. Pro residues predominate over residues 482 to 491 (RRPPSRPPVP). Over residues 492 to 509 (RTCSPAPVSPSVPRAFAS) the composition is skewed to low complexity. Positions 556–571 (PHPERRDEVPAAKRER) are enriched in basic and acidic residues. Residues 721-741 (PWYILLFGGLSMSLGLALLGY) traverse the membrane as a helical segment. Over 742-759 (RVIKTVGVKLVKITPARG) the chain is Extracellular. The chain crosses the membrane as a helical span at residues 760–780 (FSMELGAAWTVLIFSAIGIPL). Over 781-837 (STTHCAVGSTVGVGLMEPKHPRRETGDGPVAEGEEPKKRAVQCPVINTASVNWKLFG) the chain is Cytoplasmic. A helical transmembrane segment spans residues 838 to 858 (GVFVSWIITIAFSALVTAALF). Over 859-869 (SFAAYSPRMVS) the chain is Extracellular.

It belongs to the inorganic phosphate transporter (PiT) (TC 2.A.20) family.

The protein resides in the cell membrane. It is found in the vacuole membrane. The protein localises to the cytoplasmic vesicle membrane. It catalyses the reaction 2 Na(+)(out) + phosphate(out) = 2 Na(+)(in) + phosphate(in). Functionally, sodium-phosphate symporter which preferentially transports the monovalent form of phosphate with a stoichiometry of two sodium ions per phosphate ion. Plays a role in stabilizing the cytosolic pH and osmoregulation. May be required for optimal virulence of parasites in vivo. The sequence is that of Sodium-dependent phosphate transporter from Toxoplasma gondii (strain ATCC 50861 / VEG).